A 413-amino-acid chain; its full sequence is MDRHLCICREIQLRSGLLFPFLLLMMLADLALPAQRHPPVVLVPGDLGNQLEAKLDKPKVVHYLCSKRTDSYFTLWLNLELLLPVIIDCWIDNIRLVYNRTSRTTQFPDGVDVRVPGFGETFSLEFLDPSKRNVGSYFYTMVESLVGWGYTRGEDVRGAPYDWRRAPNENGPYFLALQEMIEEMYQMYGGPVVLVAHSMGNMYMLYFLQRQPQAWKDKYIQAFVSLGAPWGGVAKTLRVLASGDNNRIPVIGPLKIREQQRSAVSTSWLLPYNHTWSHEKVFVYTPTANYTLRDYHRFFQDIGFEDGWFMRQDTQGLVEALVPPGVELHCLYGTGVPTPNSFYYENFPDRDPKICFGDGDGTVNLESVLQCQAWQSRQEHKVSLQELPGSEHIEMLANATTLAYLKRVLLEEP.

The first 33 residues, 1-33 (MDRHLCICREIQLRSGLLFPFLLLMMLADLALP), serve as a signal peptide directing secretion. Residue D46 coordinates substrate. C65 and C89 are oxidised to a cystine. Residue N99 is glycosylated (N-linked (GlcNAc...) asparagine). The active-site Acyl-ester intermediate is the S198. S198 is a binding site for Zn(2+). M199 provides a ligand contact to substrate. N273 and N289 each carry an N-linked (GlcNAc...) asparagine glycan. C355 provides a ligand contact to Zn(2+). Residues D360 and H392 each act as charge relay system in the active site. H392 is a binding site for Zn(2+). N398 carries N-linked (GlcNAc...) asparagine glycosylation.

Belongs to the AB hydrolase superfamily. Lipase family. In terms of processing, N-glycosylated. N-glycosylation is important for maturation of the enzyme and normal subcellular location. In terms of tissue distribution, detected in alveolar macrophages (at protein level). Widely expressed. Expressed at highest levels in alveolar macrophages.

The protein localises to the lysosome. It is found in the secreted. It localises to the membrane. It catalyses the reaction a 1,2-diacyl-sn-glycero-3-phosphocholine + H2O = a 2-acyl-sn-glycero-3-phosphocholine + a fatty acid + H(+). The enzyme catalyses 1,2-dihexadecanoyl-sn-glycero-3-phosphocholine + H2O = 2-hexadecanoyl-sn-glycero-3-phosphocholine + hexadecanoate + H(+). The catalysed reaction is 1-hexadecanoyl-2-(9Z-octadecenoyl)-sn-glycero-3-phosphocholine + H2O = 2-(9Z-octadecenoyl)-sn-glycero-3-phosphocholine + hexadecanoate + H(+). It carries out the reaction 1,2-di-(9Z-octadecenoyl)-sn-glycero-3-phosphocholine + H2O = 2-(9Z-octadecenoyl)-sn-glycero-3-phosphocholine + (9Z)-octadecenoate + H(+). It catalyses the reaction 1-hexadecanoyl-2-glutaroyl-sn-glycero-3-phosphocholine + H2O = 2-glutaroyl-sn-glycero-3-phosphocholine + hexadecanoate + H(+). The enzyme catalyses 1-hexadecanoyl-2-nonadioyl-sn-glycero-3-phosphocholine + H2O = 2-nonadioyl-sn-glycero-3-phosphocholine + hexadecanoate + H(+). The catalysed reaction is 1-hexadecanoyl-2-(5-oxopentanoyl)-sn-glycero-3-phosphocholine + H2O = 2-(5-oxopentanoyl)-sn-glycero-3-phosphocholine + hexadecanoate + H(+). It carries out the reaction 1-hexadecanoyl-2-(9-oxononanoyl)-sn-glycero-3-phosphocholine + H2O = 2-(9-oxononanoyl)-sn-glycero-3-phosphocholine + hexadecanoate + H(+). It catalyses the reaction a 1,2-diacyl-sn-glycero-3-phosphocholine + H2O = a 1-acyl-sn-glycero-3-phosphocholine + a fatty acid + H(+). The enzyme catalyses 1,2-dihexadecanoyl-sn-glycero-3-phosphocholine + H2O = 1-hexadecanoyl-sn-glycero-3-phosphocholine + hexadecanoate + H(+). The catalysed reaction is 1-hexadecanoyl-2-(9Z-octadecenoyl)-sn-glycero-3-phosphocholine + H2O = 1-hexadecanoyl-sn-glycero-3-phosphocholine + (9Z)-octadecenoate + H(+). It carries out the reaction 1,2-di-(9Z-octadecenoyl)-sn-glycero-3-phosphocholine + H2O = 1-(9Z-octadecenoyl)-sn-glycero-3-phosphocholine + (9Z)-octadecenoate + H(+). It catalyses the reaction a 1-acyl-sn-glycero-3-phosphocholine + H2O = sn-glycerol 3-phosphocholine + a fatty acid + H(+). The enzyme catalyses 1-hexadecanoyl-sn-glycero-3-phosphocholine + H2O = sn-glycerol 3-phosphocholine + hexadecanoate + H(+). The catalysed reaction is N-(acetyl)-sphing-4-enine + a 1,2-diacyl-sn-glycero-3-phosphoethanolamine = 1-O-acyl-N-(acetyl)-sphing-4-enine + a 2-acyl-sn-glycero-3-phosphoethanolamine. It carries out the reaction 1-hexadecanoyl-2-(9Z-octadecenoyl)-sn-glycero-3-phosphoethanolamine + N-(acetyl)-sphing-4-enine = 2-(9Z-octadecenoyl)-sn-glycero-3-phosphoethanolamine + 1-hexadecanoyl-N-(acetyl)-sphing-4-enine. It catalyses the reaction 1-hexadecanoyl-2-(9Z,12Z-octadecadienoyl)-sn-glycero-3-phosphoethanolamine + N-(acetyl)-sphing-4-enine = 2-(9Z,12Z)-octadecadienoyl-sn-glycero-3-phosphoethanolamine + 1-hexadecanoyl-N-(acetyl)-sphing-4-enine. The enzyme catalyses 1-hexadecanoyl-2-(5Z,8Z,11Z,14Z-eicosatetraenoyl)-sn-glycero-3-phosphoethanolamine + N-(acetyl)-sphing-4-enine = 2-(5Z,8Z,11Z,14Z)-eicosatetraenoyl-sn-glycero-3-phosphoethanolamine + 1-hexadecanoyl-N-(acetyl)-sphing-4-enine. The catalysed reaction is N-(acetyl)-sphing-4-enine + a 1,2-diacyl-sn-glycero-3-phosphoethanolamine = 1-O-acyl-N-(acetyl)-sphing-4-enine + a 1-acyl-sn-glycero-3-phosphoethanolamine. It carries out the reaction 1-hexadecanoyl-2-(9Z-octadecenoyl)-sn-glycero-3-phosphoethanolamine + N-(acetyl)-sphing-4-enine = 1-(9Z-octadecenoyl)-N-(acetyl)-sphing-4-enine + 1-hexadecanoyl-sn-glycero-3-phosphoethanolamine. It catalyses the reaction 1-hexadecanoyl-2-(9Z,12Z-octadecadienoyl)-sn-glycero-3-phosphoethanolamine + N-(acetyl)-sphing-4-enine = 1-(9Z,12Z-octadecadienoyl)-N-acetylsphing-4-enine + 1-hexadecanoyl-sn-glycero-3-phosphoethanolamine. The enzyme catalyses 1-hexadecanoyl-2-(5Z,8Z,11Z,14Z-eicosatetraenoyl)-sn-glycero-3-phosphoethanolamine + N-(acetyl)-sphing-4-enine = 1-(5Z,8Z,11Z,14Z)-eicosatetraenoyl-N-(acetyl)-sphing-4-enine + 1-hexadecanoyl-sn-glycero-3-phosphoethanolamine. The catalysed reaction is N-(acetyl)-sphing-4-enine + a 1,2-diacyl-sn-glycero-3-phosphocholine = 1-O-acyl-N-(acetyl)-sphing-4-enine + a 2-acyl-sn-glycero-3-phosphocholine. It carries out the reaction 1-hexadecanoyl-2-(9Z-octadecenoyl)-sn-glycero-3-phosphocholine + N-(acetyl)-sphing-4-enine = 1-hexadecanoyl-N-(acetyl)-sphing-4-enine + 2-(9Z-octadecenoyl)-sn-glycero-3-phosphocholine. It catalyses the reaction 1-hexadecanoyl-2-(9Z,12Z-octadecadienoyl)-sn-glycero-3-phosphocholine + N-(acetyl)-sphing-4-enine = 2-(9Z,12Z-octadecadienoyl)-sn-glycero-3-phosphocholine + 1-hexadecanoyl-N-(acetyl)-sphing-4-enine. The enzyme catalyses 1-hexadecanoyl-2-(5Z,8Z,11Z,14Z-eicosatetraenoyl)-sn-glycero-3-phosphocholine + N-(acetyl)-sphing-4-enine = 1-hexadecanoyl-N-(acetyl)-sphing-4-enine + 2-(5Z,8Z,11Z,14Z)-eicosatetraenoyl-sn-glycero-3-phosphocholine. The catalysed reaction is 1-hexadecanoyl-2-(4Z,7Z,10Z,13Z,16Z,19Z-docosahexaenoyl)-sn-glycero-3-phosphocholine + N-(acetyl)-sphing-4-enine = 2-(4Z,7Z,10Z,13Z,16Z,19Z-docosahexaenoyl)-sn-glycero-3-phosphocholine + 1-hexadecanoyl-N-(acetyl)-sphing-4-enine. It carries out the reaction 1-hexadecanoyl-2-nonadioyl-sn-glycero-3-phosphocholine + N-(acetyl)-sphing-4-enine = 2-nonadioyl-sn-glycero-3-phosphocholine + 1-hexadecanoyl-N-(acetyl)-sphing-4-enine. It catalyses the reaction 1-octadecanoyl-2-(9Z-octadecenoyl)-sn-glycero-3-phosphocholine + N-(acetyl)-sphing-4-enine = 1-octadecanoyl-N-(acetyl)-sphing-4-enine + 2-(9Z-octadecenoyl)-sn-glycero-3-phosphocholine. The enzyme catalyses 1-(9Z)-octadecenoyl-2-octadecanoyl-sn-glycero-3-phosphocholine + N-(acetyl)-sphing-4-enine = 2-octadecanoyl-sn-glycero-3-phosphocholine + 1-(9Z-octadecenoyl)-N-(acetyl)-sphing-4-enine. The catalysed reaction is 1-octadecanoyl-2-(5Z,8Z,11Z,14Z-eicosatetraenoyl)-sn-glycero-3-phosphocholine + N-(acetyl)-sphing-4-enine = 1-octadecanoyl-N-(acetyl)-sphing-4-enine + 2-(5Z,8Z,11Z,14Z)-eicosatetraenoyl-sn-glycero-3-phosphocholine. It carries out the reaction 1-(9Z-octadecenoyl)-2-hexadecanoyl-sn-glycero-3-phosphocholine + N-(acetyl)-sphing-4-enine = 1-(9Z-octadecenoyl)-N-(acetyl)-sphing-4-enine + 2-hexadecanoyl-sn-glycero-3-phosphocholine. It catalyses the reaction N-(acetyl)-sphing-4-enine + a 1,2-diacyl-sn-glycero-3-phosphocholine = 1-O-acyl-N-(acetyl)-sphing-4-enine + a 1-acyl-sn-glycero-3-phosphocholine. The enzyme catalyses 1-hexadecanoyl-2-(9Z-octadecenoyl)-sn-glycero-3-phosphocholine + N-(acetyl)-sphing-4-enine = 1-(9Z-octadecenoyl)-N-(acetyl)-sphing-4-enine + 1-hexadecanoyl-sn-glycero-3-phosphocholine. The catalysed reaction is 1-hexadecanoyl-2-(9Z,12Z-octadecadienoyl)-sn-glycero-3-phosphocholine + N-(acetyl)-sphing-4-enine = 1-(9Z,12Z-octadecadienoyl)-N-acetylsphing-4-enine + 1-hexadecanoyl-sn-glycero-3-phosphocholine. It carries out the reaction 1-hexadecanoyl-2-(5Z,8Z,11Z,14Z-eicosatetraenoyl)-sn-glycero-3-phosphocholine + N-(acetyl)-sphing-4-enine = 1-(5Z,8Z,11Z,14Z)-eicosatetraenoyl-N-(acetyl)-sphing-4-enine + 1-hexadecanoyl-sn-glycero-3-phosphocholine. It catalyses the reaction 1-hexadecanoyl-2-(4Z,7Z,10Z,13Z,16Z,19Z-docosahexaenoyl)-sn-glycero-3-phosphocholine + N-(acetyl)-sphing-4-enine = 1-(4Z,7Z,10Z,13Z,16Z,19Z-docosahexaenoyl)-N-(acetyl)-sphing-4-enine + 1-hexadecanoyl-sn-glycero-3-phosphocholine. The enzyme catalyses 1-octadecanoyl-2-(9Z-octadecenoyl)-sn-glycero-3-phosphocholine + N-(acetyl)-sphing-4-enine = 1-(9Z-octadecenoyl)-N-(acetyl)-sphing-4-enine + 1-octadecanoyl-sn-glycero-3-phosphocholine. The catalysed reaction is 1-octadecanoyl-2-(9Z,12Z)-octadecadienoyl-sn-glycero-3-phosphocholine + N-(acetyl)-sphing-4-enine = 1-(9Z,12Z-octadecadienoyl)-N-acetylsphing-4-enine + 1-octadecanoyl-sn-glycero-3-phosphocholine. It carries out the reaction 1-(9Z-octadecenoyl)-2-hexadecanoyl-sn-glycero-3-phosphocholine + N-(acetyl)-sphing-4-enine = 1-hexadecanoyl-N-(acetyl)-sphing-4-enine + 1-(9Z-octadecenoyl)-sn-glycero-3-phosphocholine. It catalyses the reaction 1-(9Z)-octadecenoyl-2-octadecanoyl-sn-glycero-3-phosphocholine + N-(acetyl)-sphing-4-enine = 1-octadecanoyl-N-(acetyl)-sphing-4-enine + 1-(9Z-octadecenoyl)-sn-glycero-3-phosphocholine. The enzyme catalyses 1,2-di-(9Z-octadecenoyl)-sn-glycero-3-phosphocholine + N-(acetyl)-sphing-4-enine = 1-(9Z-octadecenoyl)-N-(acetyl)-sphing-4-enine + 1-(9Z-octadecenoyl)-sn-glycero-3-phosphocholine. The catalysed reaction is 1-octadecanoyl-2-(5Z,8Z,11Z,14Z-eicosatetraenoyl)-sn-glycero-3-phosphocholine + N-(acetyl)-sphing-4-enine = 1-(5Z,8Z,11Z,14Z)-eicosatetraenoyl-N-(acetyl)-sphing-4-enine + 1-octadecanoyl-sn-glycero-3-phosphocholine. It carries out the reaction a 1,2-diacyl-sn-glycero-3-phospho-L-serine + N-(acetyl)-sphing-4-enine = a 2-acyl-sn-glycero-3-phospho-L-serine + 1-O-acyl-N-(acetyl)-sphing-4-enine. It catalyses the reaction 1-octadecanoyl-2-(9Z-octadecenoyl)-sn-glycero-3-phospho-L-serine + N-(acetyl)-sphing-4-enine = 2-(9Z-octadecenoyl)-sn-glycero-3-phospho-L-serine + 1-octadecanoyl-N-(acetyl)-sphing-4-enine. The enzyme catalyses a 1,2-diacyl-sn-glycero-3-phospho-L-serine + N-(acetyl)-sphing-4-enine = 1-O-acyl-N-(acetyl)-sphing-4-enine + a 1-acyl-sn-glycero-3-phospho-L-serine. The catalysed reaction is 1-octadecanoyl-2-(9Z-octadecenoyl)-sn-glycero-3-phospho-L-serine + N-(acetyl)-sphing-4-enine = 1-octadecanoyl-sn-glycero-3-phosphoserine + 1-(9Z-octadecenoyl)-N-(acetyl)-sphing-4-enine. It carries out the reaction a 1,2-diacyl-sn-glycero-3-phospho-(1'-sn-glycerol) + N-(acetyl)-sphing-4-enine = 2-acyl-sn-glycero-3-phospho-(1'-sn-glycerol) + 1-O-acyl-N-(acetyl)-sphing-4-enine. It catalyses the reaction 1-octadecanoyl-2-(9Z-octadecenoyl)-sn-glycero-3-phospho-(1'-sn-glycerol) + N-(acetyl)-sphing-4-enine = 2-(9Z-octadecenoyl)-sn-glycero-3-phospho-(1'-sn-glycerol) + 1-octadecanoyl-N-(acetyl)-sphing-4-enine. The enzyme catalyses a 1,2-diacyl-sn-glycero-3-phospho-(1'-sn-glycerol) + N-(acetyl)-sphing-4-enine = 1-O-acyl-N-(acetyl)-sphing-4-enine + 1-acyl-sn-glycero-3-phospho-(1'-sn-glycerol). The catalysed reaction is 1-octadecanoyl-2-(9Z-octadecenoyl)-sn-glycero-3-phospho-(1'-sn-glycerol) + N-(acetyl)-sphing-4-enine = 1-octadecanoyl-sn-glycero-3-phospho-(1'-sn-glycerol) + 1-(9Z-octadecenoyl)-N-(acetyl)-sphing-4-enine. It carries out the reaction an N-acylethanolamine + a 1,2-diacyl-sn-glycero-3-phosphocholine = 2-(acylamino)ethyl fatty acid + a 2-acyl-sn-glycero-3-phosphocholine. It catalyses the reaction an N-acylethanolamine + a 1,2-diacyl-sn-glycero-3-phosphocholine = 2-(acylamino)ethyl fatty acid + a 1-acyl-sn-glycero-3-phosphocholine. The enzyme catalyses N-(5Z,8Z,11Z,14Z-eicosatetraenoyl)-ethanolamine + 1,2-di-(9Z-octadecenoyl)-sn-glycero-3-phosphocholine = 2-[(5Z,8Z,11Z,14Z)-eicosatetraenoylamino]ethyl (9Z)-octadecenoate + (9Z-octadecenoyl)-sn-glycero-3-phosphocholine. The catalysed reaction is N-(9Z-octadecenoyl) ethanolamine + 1,2-di-(9Z-octadecenoyl)-sn-glycero-3-phosphocholine = 2-[(9Z)-octadecenoylamino]ethyl (9Z)-octadecenoate + (9Z-octadecenoyl)-sn-glycero-3-phosphocholine. It carries out the reaction a 3-acyl-sn-glycerol + a 1,2-diacyl-sn-glycero-3-phosphocholine = a 1,3-diacylglycerol + a 1-acyl-sn-glycero-3-phosphocholine. It catalyses the reaction a 3-acyl-sn-glycerol + a 1,2-diacyl-sn-glycero-3-phosphocholine = a 1,3-diacylglycerol + a 2-acyl-sn-glycero-3-phosphocholine. The enzyme catalyses 3-(9Z-octadecenoyl)-sn-glycerol + 1,2-di-(9Z-octadecenoyl)-sn-glycero-3-phosphocholine = 1,3-di-(9Z-octadecenoyl)-glycerol + (9Z-octadecenoyl)-sn-glycero-3-phosphocholine. The catalysed reaction is 3-hexadecanoyl-sn-glycerol + 1,2-di-(9Z-octadecenoyl)-sn-glycero-3-phosphocholine = 1-(9Z)-octadecenoyl-3-hexadecanoyl-sn-glycerol + (9Z-octadecenoyl)-sn-glycero-3-phosphocholine. It carries out the reaction a 1-acyl-sn-glycerol + a 1,2-diacyl-sn-glycero-3-phosphocholine = a 1,3-diacylglycerol + a 2-acyl-sn-glycero-3-phosphocholine. It catalyses the reaction a 1-acyl-sn-glycerol + a 1,2-diacyl-sn-glycero-3-phosphocholine = a 1,3-diacylglycerol + a 1-acyl-sn-glycero-3-phosphocholine. The enzyme catalyses 1-(9Z-octadecenoyl)-sn-glycerol + 1,2-di-(9Z-octadecenoyl)-sn-glycero-3-phosphocholine = 1,3-di-(9Z-octadecenoyl)-glycerol + (9Z-octadecenoyl)-sn-glycero-3-phosphocholine. The catalysed reaction is 1-hexadecanoyl-sn-glycerol + 1,2-di-(9Z-octadecenoyl)-sn-glycero-3-phosphocholine = 1-hexadecanoyl-3-(9Z)-octadecenoyl-sn-glycerol + (9Z-octadecenoyl)-sn-glycero-3-phosphocholine. It carries out the reaction a 2-acylglycerol + a 1,2-diacyl-sn-glycero-3-phosphocholine = a 1,2-diacylglycerol + a 2-acyl-sn-glycero-3-phosphocholine. It catalyses the reaction a 2-acylglycerol + a 1,2-diacyl-sn-glycero-3-phosphocholine = a 1,2-diacylglycerol + a 1-acyl-sn-glycero-3-phosphocholine. The enzyme catalyses 2-hexadecanoylglycerol + 1,2-di-(9Z-octadecenoyl)-sn-glycero-3-phosphocholine = 1-(9Z)-octadecenoyl-2-hexadecanoylglycerol + (9Z-octadecenoyl)-sn-glycero-3-phosphocholine. The catalysed reaction is 1-O-alkylglycerol + a 1,2-diacyl-sn-glycero-3-phosphocholine = 1-O-alkyl-3-acylglycerol + a 1-acyl-sn-glycero-3-phosphocholine. It carries out the reaction 1-O-alkylglycerol + a 1,2-diacyl-sn-glycero-3-phosphocholine = 1-O-alkyl-3-acylglycerol + a 2-acyl-sn-glycero-3-phosphocholine. It catalyses the reaction 1-O-hexadecylglycerol + 1,2-di-(9Z-octadecenoyl)-sn-glycero-3-phosphocholine = 1-O-hexadecyl-3-(9Z)-octadecenoylglycerol + (9Z-octadecenoyl)-sn-glycero-3-phosphocholine. The enzyme catalyses 1-O-alkyl-2-acyl-sn-glycerol + a 1,2-diacyl-sn-glycero-3-phosphocholine = 1-O-alkyl-2,3-diacyl-sn-glycerol + a 2-acyl-sn-glycero-3-phosphocholine. The catalysed reaction is 1-O-alkyl-2-acyl-sn-glycerol + a 1,2-diacyl-sn-glycero-3-phosphocholine = 1-O-alkyl-2,3-diacyl-sn-glycerol + a 1-acyl-sn-glycero-3-phosphocholine. It carries out the reaction 1-O-hexadecyl-2-acetyl-sn-glycerol + 1,2-di-(9Z-octadecenoyl)-sn-glycero-3-phosphocholine = 1-O-hexadecyl-2-acetyl-3-(9Z)-octadecenoyl-sn-glycerol + (9Z-octadecenoyl)-sn-glycero-3-phosphocholine. It catalyses the reaction 1-O-hexadecyl-2-O-methyl-sn-glycerol + 1,2-di-(9Z-octadecenoyl)-sn-glycero-3-phosphocholine = 1-O-hexadecyl-2-O-methyl-3-(9Z)-octadecenoyl-sn-glycerol + (9Z-octadecenoyl)-sn-glycero-3-phosphocholine. The enzyme catalyses a 1,2-diacyl-sn-glycero-3-phosphoethanolamine + H2O = a 1-acyl-sn-glycero-3-phosphoethanolamine + a fatty acid + H(+). The catalysed reaction is 1-acyl-2-(5Z,8Z,11Z,14Z)-eicosatetraenoyl-sn-glycero-3-phosphoethanolamine + H2O = a 1-acyl-sn-glycero-3-phosphoethanolamine + (5Z,8Z,11Z,14Z)-eicosatetraenoate + H(+). It carries out the reaction a 1,2-diacyl-sn-glycero-3-phospho-(1'-sn-glycerol) + H2O = 1-acyl-sn-glycero-3-phospho-(1'-sn-glycerol) + a fatty acid + H(+). It catalyses the reaction 1-hexadecanoyl-2-(9Z-octadecenoyl)-sn-glycero-3-phospho-(1'-sn-glycerol) + H2O = 1-hexadecanoyl-sn-glycero-3-phospho-(1'-sn-glycerol) + (9Z)-octadecenoate + H(+). The enzyme catalyses a 1,2-diacyl-sn-glycero-3-phospho-(1'-sn-glycerol) + H2O = 2-acyl-sn-glycero-3-phospho-(1'-sn-glycerol) + a fatty acid + H(+). The catalysed reaction is 1-hexadecanoyl-2-(9Z-octadecenoyl)-sn-glycero-3-phospho-(1'-sn-glycerol) + H2O = 2-(9Z-octadecenoyl)-sn-glycero-3-phospho-(1'-sn-glycerol) + hexadecanoate + H(+). Transacylase activity is inhibited by MJ33. Functionally, has dual calcium-independent phospholipase and O-acyltransferase activities with a potential role in glycerophospholipid homeostasis and remodeling of acyl groups of lipophilic alcohols present in acidic cellular compartments. Catalyzes hydrolysis of the ester bond of the fatty acyl group attached at sn-1 or sn-2 position of phospholipids (phospholipase A1 or A2 activity) and transfer it to the hydroxyl group at the first carbon of lipophilic alcohols (O-acyltransferase activity). Among preferred fatty acyl donors are phosphatidylcholines, phosphatidylethanolamines, phosphatidylglycerols and phosphatidylserines. Favors sn-2 over sn-1 deacylation of unsaturated fatty acyl groups of phosphatidylcholines, phosphatidylethanolamines, and phosphatidylglycerols. Among preferred fatty acyl acceptors are natural lipophilic alcohols including short-chain ceramide N-acetyl-sphingosine (C2 ceramide), alkylacylglycerols, monoacylglycerols, and acylethanolamides such as anandamide and oleoylethanolamide. Selectively hydrolyzes the sn-1 fatty acyl group of truncated oxidized phospholipids and may play a role in detoxification of reactive oxidized phospholipids during oxidative stress. Required for normal phospholipid degradation in alveolar macrophages with potential implications in the clearance of pulmonary surfactant, which is mainly composed of dipalmitoylphosphatidylcholine (1,2-dihexadecanoyl-sn-glycero-3-phosphocholine). Involved in the first step of bis(monoacylglycero)phosphate (BMP) de novo synthesis from phosphatidylglycerol (1,2-diacyl-sn-glycero-3-phospho-(1'-sn-glycerol), PG). BMP is an important player in cargo sorting and degradation, regulation of cellular cholesterol levels and intercellular communication. At neutral pH, hydrolyzes the sn-1 fatty acyl group of the lysophosphatidylcholines. This Rattus norvegicus (Rat) protein is Lysosomal phospholipase A and acyltransferase (Pla2g15).